The following is a 171-amino-acid chain: Disulfide bond formation protein B (171 aa).

The Cytoplasmic portion of the chain corresponds to 1–13; the sequence is MSALTRFAQSRLA. A helical transmembrane segment spans residues 14-30; that stretch reads WTLLLLTAVGLEACALF. The Periplasmic segment spans residues 31 to 48; it reads FQHVMKLDPCVMCIYQRL. Residues Cys-40 and Cys-43 are joined by a disulfide bond. The helical transmembrane segment at 49-64 threads the bilayer; sequence AVLGVLTAGLIGVVGH. Residues 65 to 71 are Cytoplasmic-facing; sequence QFRLLRF. Residues 72–89 form a helical membrane-spanning segment; sequence LGVLLWGVSAAWGLKLAL. The Periplasmic portion of the chain corresponds to 90–144; it reads ELVEMQTNPSPFSTCSFLPEFPEWMPLHEWFPSVFLPTGMCTDIPWEMFGITMSQ. A disulfide bond links Cys-104 and Cys-130. Residues 145 to 163 form a helical membrane-spanning segment; that stretch reads WMVVAFSTYLIALVVFIVP. The Cytoplasmic segment spans residues 164–171; it reads ALMPTKKA.

Belongs to the DsbB family.

Its subcellular location is the cell inner membrane. Required for disulfide bond formation in some periplasmic proteins. Acts by oxidizing the DsbA protein. The sequence is that of Disulfide bond formation protein B from Shewanella loihica (strain ATCC BAA-1088 / PV-4).